Reading from the N-terminus, the 142-residue chain is Large ribosomal subunit protein bL17 (142 aa).

The protein belongs to the bacterial ribosomal protein bL17 family. In terms of assembly, part of the 50S ribosomal subunit. Contacts protein L32.

The polypeptide is Large ribosomal subunit protein bL17 (Wolbachia sp. subsp. Brugia malayi (strain TRS)).